Reading from the N-terminus, the 209-residue chain is Probable nicotinate-nucleotide adenylyltransferase (209 aa).

This sequence belongs to the NadD family.

It catalyses the reaction nicotinate beta-D-ribonucleotide + ATP + H(+) = deamido-NAD(+) + diphosphate. Its pathway is cofactor biosynthesis; NAD(+) biosynthesis; deamido-NAD(+) from nicotinate D-ribonucleotide: step 1/1. Its function is as follows. Catalyzes the reversible adenylation of nicotinate mononucleotide (NaMN) to nicotinic acid adenine dinucleotide (NaAD). The sequence is that of Probable nicotinate-nucleotide adenylyltransferase from Shewanella woodyi (strain ATCC 51908 / MS32).